The chain runs to 831 residues: Phenylalanine--tRNA ligase beta subunit (831 aa).

Residues 42–157 enclose the tRNA-binding domain; the sequence is ADISGPIVVG…GFAEPGTKAD (116 aa). The B5 domain maps to 408–483; the sequence is VPREPIVVRA…RNEGYENIPA (76 aa). The Mg(2+) site is built by D461, D467, E470, and E471. Residues 737 to 830 enclose the FDX-ACB domain; it reads STYPVATQDV…AAERTGAVLR (94 aa).

It belongs to the phenylalanyl-tRNA synthetase beta subunit family. Type 1 subfamily. In terms of assembly, tetramer of two alpha and two beta subunits. Mg(2+) serves as cofactor.

The protein resides in the cytoplasm. The enzyme catalyses tRNA(Phe) + L-phenylalanine + ATP = L-phenylalanyl-tRNA(Phe) + AMP + diphosphate + H(+). This Thermobifida fusca (strain YX) protein is Phenylalanine--tRNA ligase beta subunit.